Consider the following 331-residue polypeptide: NmrA-like family domain-containing oxidoreductase himF (331 aa).

Residues 8-13 (GATGNQ), 34-38 (RNAES), 55-56 (DG), 76-78 (TNG), K133, and 155-167 (WFFETFLEPQMAA) contribute to the NADP(+) site.

Belongs to the NmrA-type oxidoreductase family.

It functions in the pathway secondary metabolite biosynthesis. NmrA-like family domain-containing oxidoreductase; part of the him gene cluster that mediates the biosynthesis of himeic acid A, a ubiquitin-activating enzyme (E1) inhibitor. First, himA, together with the trans-enoyl reductase himH, catalyzes the formation of apolyketide chain, which is then condensed with leucine by the NRPS activity of himA. Dieckmann cyclization and release from himA gives a tetramic acid intermediate as the product of himA PKS-NRPS. HimG then catalyzes alpha-oxidation of the tetramic acid ring, with a subsequent rearrangement to yield apyrone intermediate. Two terminal methyl groups of polyketide and amide side chains are oxidized to carboxylic acids by himC cytochrome P450 monooxygenase to form himeic acid A. Himeic acid A is further converted to himeic acid B and C during culture growth. No gene responsible for pyrone to pyridone conversion was found in the him gene cluster and himeic acid A is non-enzymatically converted to himeic acid C by the incorporation of an ammonium nitrogen atom in a pH5 buffer, and to himeic acid B at a conversion ratio of 50% during incubation in MeOH for 5 days. This chain is NmrA-like family domain-containing oxidoreductase himF, found in Aspergillus japonicus.